Here is a 1295-residue protein sequence, read N- to C-terminus: Phosphoribosylformylglycinamidine synthase (1295 aa).

The disordered stretch occupies residues 305–327 (WPGAATGSGGEIRDEGATGRGAK). ATP is bound by residues 307–318 (GAATGSGGEIRD) and A678. Mg(2+)-binding residues include E718, N722, and D884. Position 886 (S886) interacts with ATP. Positions 1042 to 1295 (VAVLREQGVN…IFRNARKQLG (254 aa)) constitute a Glutamine amidotransferase type-1 domain. C1135 functions as the Nucleophile in the catalytic mechanism. Active-site residues include H1260 and E1262.

The protein in the N-terminal section; belongs to the FGAMS family. As to quaternary structure, monomer.

Its subcellular location is the cytoplasm. It catalyses the reaction N(2)-formyl-N(1)-(5-phospho-beta-D-ribosyl)glycinamide + L-glutamine + ATP + H2O = 2-formamido-N(1)-(5-O-phospho-beta-D-ribosyl)acetamidine + L-glutamate + ADP + phosphate + H(+). Its pathway is purine metabolism; IMP biosynthesis via de novo pathway; 5-amino-1-(5-phospho-D-ribosyl)imidazole from N(2)-formyl-N(1)-(5-phospho-D-ribosyl)glycinamide: step 1/2. Functionally, phosphoribosylformylglycinamidine synthase involved in the purines biosynthetic pathway. Catalyzes the ATP-dependent conversion of formylglycinamide ribonucleotide (FGAR) and glutamine to yield formylglycinamidine ribonucleotide (FGAM) and glutamate. This chain is Phosphoribosylformylglycinamidine synthase, found in Escherichia coli O6:K15:H31 (strain 536 / UPEC).